We begin with the raw amino-acid sequence, 173 residues long: T-complex protein 1 subunit alpha (173 aa).

It belongs to the TCP-1 chaperonin family. As to quaternary structure, component of the chaperonin-containing T-complex (TRiC), a heterooligomeric complex of about 850 to 900 kDa that forms two stacked rings, 12 to 16 nm in diameter.

It localises to the cytoplasm. Its subcellular location is the cytosol. Component of the chaperonin-containing T-complex (TRiC), a molecular chaperone complex that assists the folding of proteins upon ATP hydrolysis. In Ambystoma mexicanum (Axolotl), this protein is T-complex protein 1 subunit alpha.